Consider the following 207-residue polypeptide: LexA repressor (207 aa).

The H-T-H motif DNA-binding region spans valine 28–serine 48. Catalysis depends on for autocatalytic cleavage activity residues serine 130 and lysine 168.

The protein belongs to the peptidase S24 family. In terms of assembly, homodimer.

It catalyses the reaction Hydrolysis of Ala-|-Gly bond in repressor LexA.. Functionally, represses a number of genes involved in the response to DNA damage (SOS response), including recA and lexA. In the presence of single-stranded DNA, RecA interacts with LexA causing an autocatalytic cleavage which disrupts the DNA-binding part of LexA, leading to derepression of the SOS regulon and eventually DNA repair. This Staphylococcus haemolyticus (strain JCSC1435) protein is LexA repressor.